The chain runs to 592 residues: Aspartate--tRNA(Asp/Asn) ligase (592 aa).

Position 175 (E175) interacts with L-aspartate. An aspartate region spans residues 199–202; it reads QLFK. R221 contributes to the L-aspartate binding site. ATP contacts are provided by residues 221–223 and Q230; that span reads RDE. Residue H450 participates in L-aspartate binding. E483 contacts ATP. R490 is a binding site for L-aspartate. ATP is bound at residue 535-538; the sequence is GLDR.

The protein belongs to the class-II aminoacyl-tRNA synthetase family. Type 1 subfamily. Homodimer.

The protein resides in the cytoplasm. The catalysed reaction is tRNA(Asx) + L-aspartate + ATP = L-aspartyl-tRNA(Asx) + AMP + diphosphate. Its function is as follows. Aspartyl-tRNA synthetase with relaxed tRNA specificity since it is able to aspartylate not only its cognate tRNA(Asp) but also tRNA(Asn). Reaction proceeds in two steps: L-aspartate is first activated by ATP to form Asp-AMP and then transferred to the acceptor end of tRNA(Asp/Asn). This chain is Aspartate--tRNA(Asp/Asn) ligase, found in Acinetobacter baumannii (strain ATCC 17978 / DSM 105126 / CIP 53.77 / LMG 1025 / NCDC KC755 / 5377).